The primary structure comprises 324 residues: Acetyl-coenzyme A carboxylase carboxyl transferase subunit alpha (324 aa).

Positions 44 to 298 constitute a CoA carboxyltransferase C-terminal domain; it reads ILQRKLLNLK…KNKIRDQLDF (255 aa).

The protein belongs to the AccA family. Acetyl-CoA carboxylase is a heterohexamer composed of biotin carboxyl carrier protein (accB), biotin carboxylase (accC) and two subunits each of ACCase subunit alpha (accA) and ACCase subunit beta (accD).

The protein localises to the plastid. The protein resides in the chloroplast. It carries out the reaction N(6)-carboxybiotinyl-L-lysyl-[protein] + acetyl-CoA = N(6)-biotinyl-L-lysyl-[protein] + malonyl-CoA. It participates in lipid metabolism; malonyl-CoA biosynthesis; malonyl-CoA from acetyl-CoA: step 1/1. In terms of biological role, component of the acetyl coenzyme A carboxylase (ACC) complex. First, biotin carboxylase catalyzes the carboxylation of biotin on its carrier protein (BCCP) and then the CO(2) group is transferred by the carboxyltransferase to acetyl-CoA to form malonyl-CoA. This Cyanidium caldarium (Red alga) protein is Acetyl-coenzyme A carboxylase carboxyl transferase subunit alpha.